Here is a 329-residue protein sequence, read N- to C-terminus: Holliday junction branch migration complex subunit RuvB (329 aa).

A large ATPase domain (RuvB-L) region spans residues 1–180; the sequence is MKNILQSTEC…FGIPIHLEFY (180 aa). ATP is bound by residues arginine 20, glycine 61, lysine 64, threonine 65, threonine 66, 127–129, arginine 170, tyrosine 180, and arginine 217; that span reads EDF. Residue threonine 65 coordinates Mg(2+). The small ATPAse domain (RuvB-S) stretch occupies residues 181–252; sequence STEELTKVIQ…FADKALLRLG (72 aa). The interval 255 to 329 is head domain (RuvB-H); that stretch reads KLGLDRQDIQ…ISHLREQEYI (75 aa). DNA contacts are provided by arginine 308 and arginine 313.

This sequence belongs to the RuvB family. In terms of assembly, homohexamer. Forms an RuvA(8)-RuvB(12)-Holliday junction (HJ) complex. HJ DNA is sandwiched between 2 RuvA tetramers; dsDNA enters through RuvA and exits via RuvB. An RuvB hexamer assembles on each DNA strand where it exits the tetramer. Each RuvB hexamer is contacted by two RuvA subunits (via domain III) on 2 adjacent RuvB subunits; this complex drives branch migration. In the full resolvosome a probable DNA-RuvA(4)-RuvB(12)-RuvC(2) complex forms which resolves the HJ.

The protein resides in the cytoplasm. The catalysed reaction is ATP + H2O = ADP + phosphate + H(+). The RuvA-RuvB-RuvC complex processes Holliday junction (HJ) DNA during genetic recombination and DNA repair, while the RuvA-RuvB complex plays an important role in the rescue of blocked DNA replication forks via replication fork reversal (RFR). RuvA specifically binds to HJ cruciform DNA, conferring on it an open structure. The RuvB hexamer acts as an ATP-dependent pump, pulling dsDNA into and through the RuvAB complex. RuvB forms 2 homohexamers on either side of HJ DNA bound by 1 or 2 RuvA tetramers; 4 subunits per hexamer contact DNA at a time. Coordinated motions by a converter formed by DNA-disengaged RuvB subunits stimulates ATP hydrolysis and nucleotide exchange. Immobilization of the converter enables RuvB to convert the ATP-contained energy into a lever motion, pulling 2 nucleotides of DNA out of the RuvA tetramer per ATP hydrolyzed, thus driving DNA branch migration. The RuvB motors rotate together with the DNA substrate, which together with the progressing nucleotide cycle form the mechanistic basis for DNA recombination by continuous HJ branch migration. Branch migration allows RuvC to scan DNA until it finds its consensus sequence, where it cleaves and resolves cruciform DNA. This is Holliday junction branch migration complex subunit RuvB from Ehrlichia chaffeensis (strain ATCC CRL-10679 / Arkansas).